The chain runs to 809 residues: Zygotic DNA replication licensing factor mcm3 (809 aa).

Positions 297 to 504 constitute an MCM domain; sequence IFEQLSRSLA…QDREISDHVL (208 aa). ATP is bound at residue 347–354; it reads GDPSVAKS. An Arginine finger motif is present at residues 479 to 482; the sequence is SRFD. The interval 664-741 is disordered; sequence KKRRRRDEDS…TDSSAKPGLS (78 aa). Over residues 696-705 the composition is skewed to basic and acidic residues; sequence AQEGESHDPY.

Belongs to the MCM family. As to quaternary structure, component of the mcm2-7 complex (RLF-M). The complex forms a toroidal hexameric ring with the proposed subunit order mcm2-mcm6-mcm4-mcm7-mcm3-mcm5. Component of the CMG helicase complex, composed of the mcm2-7 complex, the GINS complex and cdc45.

Its subcellular location is the nucleus. The protein resides in the chromosome. The enzyme catalyses ATP + H2O = ADP + phosphate + H(+). Its function is as follows. Acts as a component of the MCM2-7 complex (MCM complex) which is the putative replicative helicase essential for 'once per cell cycle' DNA replication initiation and elongation in eukaryotic cells. The active ATPase sites in the MCM2-7 ring are formed through the interaction surfaces of two neighboring subunits such that a critical structure of a conserved arginine finger motif is provided in trans relative to the ATP-binding site of the Walker A box of the adjacent subunit. The six ATPase active sites, however, are likely to contribute differentially to the complex helicase activity. The existence of maternal and zygotic forms of mcm3 and mcm6 suggests that specific forms of mcm2-7 complexes may be used during different stages of development. The sequence is that of Zygotic DNA replication licensing factor mcm3 (zmcm3) from Xenopus tropicalis (Western clawed frog).